The sequence spans 191 residues: MSLISRLKAVVAGDEYLEDDFDELDYASEDELNDINNFKQNPKNANALANSNPFDFMNNNRSSKVVGMPGISNSSSEVSLMEPRSFDEMPQAIQALRERKTVILNLTMMDPDQAQRAVDFIAGGTYAIDGHQERVGESIFLFAPSCVNVTSSSPEEASPSSVSTEKTPQYSLGKNTTPEPAWGNSKLSAYS.

The span at 151 to 164 (SSSPEEASPSSVST) shows a compositional bias: low complexity. Positions 151–191 (SSSPEEASPSSVSTEKTPQYSLGKNTTPEPAWGNSKLSAYS) are disordered. Positions 165–178 (EKTPQYSLGKNTTP) are enriched in polar residues.

It belongs to the SepF family. Homodimer. Interacts with FtsZ.

The protein localises to the cytoplasm. Cell division protein that is part of the divisome complex and is recruited early to the Z-ring. Probably stimulates Z-ring formation, perhaps through the cross-linking of FtsZ protofilaments. Its function overlaps with FtsA. This is Cell division protein SepF from Prochlorococcus marinus (strain MIT 9301).